Consider the following 386-residue polypeptide: MSFPADSVGLVTPQKFQFEEPLHLECGRVLPRFELMVETYGTLNADKSNAILICHALSGHHHAAGYHHEDDKKAGWWDSCIGPGKAIDTNKFFVVALNNIGGCSGSTGPTSPNPENDNRPYGPDFPLVTVRDWVKTQAMLSDRLGISVWYAVVGGSLGGMQALQWSVDYPDRLQKCVVIASAPKLSAQNIAFNEVARQSILSDPDFHHGRYLENDSYPKRGLILARMVGHITYLSEEAMKQKFGRDLKSGKFMYGFDVEFQVESYLRYQGEQFSRNFDANTYLIMTKALDYFDPSREYGHSLTEAMSKTKCQFLIVSFTTDWRFAPSRSQEIVDALITNHKPVSYLDIDAEQGHDSFLFPIPLYVKTLRAFLGGEEHLKSTSLEAS.

The AB hydrolase-1 domain occupies 49–358 (NAILICHALS…DAEQGHDSFL (310 aa)). Serine 156 acts as the Nucleophile in catalysis. Arginine 226 is a substrate binding site. Residues aspartate 321 and histidine 354 contribute to the active site. Aspartate 355 is a substrate binding site.

It belongs to the AB hydrolase superfamily. MetX family. In terms of assembly, homodimer.

It is found in the cytoplasm. It carries out the reaction L-homoserine + succinyl-CoA = O-succinyl-L-homoserine + CoA. It participates in amino-acid biosynthesis; L-methionine biosynthesis via de novo pathway; O-succinyl-L-homoserine from L-homoserine: step 1/1. Transfers a succinyl group from succinyl-CoA to L-homoserine, forming succinyl-L-homoserine. The polypeptide is Homoserine O-succinyltransferase (Acinetobacter baumannii (strain ACICU)).